The primary structure comprises 153 residues: UPF0260 protein YcgN (153 aa).

Belongs to the UPF0260 family.

The protein is UPF0260 protein YcgN of Shigella boydii serotype 18 (strain CDC 3083-94 / BS512).